The primary structure comprises 28 residues: Short cationic peptide-1c (28 aa).

Position 28 is a glutamic acid 1-amide (Glu-28).

Expressed by the venom gland.

The protein resides in the secreted. The protein is Short cationic peptide-1c of Cupiennius salei (American wandering spider).